We begin with the raw amino-acid sequence, 246 residues long: Orotidine 5'-phosphate decarboxylase (246 aa).

Residues D22, K44, 71–80 (DLKYHDIPHT), T130, R191, Q201, G221, and R222 contribute to the substrate site. The active-site Proton donor is the K73.

This sequence belongs to the OMP decarboxylase family. Type 1 subfamily. As to quaternary structure, homodimer.

It carries out the reaction orotidine 5'-phosphate + H(+) = UMP + CO2. The protein operates within pyrimidine metabolism; UMP biosynthesis via de novo pathway; UMP from orotate: step 2/2. Its function is as follows. Catalyzes the decarboxylation of orotidine 5'-monophosphate (OMP) to uridine 5'-monophosphate (UMP). This Neisseria meningitidis serogroup C (strain 053442) protein is Orotidine 5'-phosphate decarboxylase.